Reading from the N-terminus, the 765-residue chain is MFNITNIQSTARHQSISNEASTEVPLKEEIWNKISAFFSSEHQVEAQNCIAYLCHPPETASPEEIKSKFECLRMLAFPAYADNIQYSRGGADQYCILSENSQEILSIVFNTEGYTVEGGGKSVTYTRVTESEQASSASGSKDAVNYELIWSEWVKEAPAKEAANREEAVQRMRDCLKNNKTELRLKILGLTTIPAYIPEQITTLILDNNELKSLPENLQGNIKTLYANSNQLTSIPATLPDTIQEMELSINRITELPERLPSALQSLDLFHNKISCLPENLPEELRYLSVYDNSIRTLPAHLPSGITHLNVQSNSLTALPETLPPGLKTLEAGENALTSLPASLPPELQVLDVSKNQITVLPETLPPTITTLDVSRNALTNLPENLPAALQIMQASRNNLVRLPESLPHFRGEGPQPTRIIVEYNPFSERTIQNMQRLMSSVDYQGPRVLFAMGDFSIVRVTRPLHQAVQGWLTSLEEEDVNQWRAFEAEANAAAFSGFLDYLGDTQNTRHPDFKEQVSAWLMRLAEDSALRETVFIIAMNATISCEDRVTLAYHQMQEATLVHDAERGAFDSHLAELIMAGREIFRLEQIESLAREKVKRLFFIDEVEVFLGFQNQLRESLSLTTMTRDMRFYNVSGITESDLDEAEIRIKMAENRDFHKWFALWGPWHKVLERIAPEEWREMMAKRDECIETDEYQSRVNAELEDLRIADDSDAERTTEVQMDAERAIGIKIMEEINQTLFTEIMENILLKKEVSSLMSAYWR.

Residues 1–451 (MFNITNIQST…VDYQGPRVLF (451 aa)) form an interaction with target proteins region. LRR repeat units follow at residues 200 to 219 (QITT…ENLQ), 221 to 242 (NIKT…LPDT), 243 to 262 (IQEM…RLPS), 263 to 284 (ALQS…LPEE), 285 to 305 (LRYL…LPSG), 306 to 325 (ITHL…TLPP), 326 to 346 (GLKT…SLPP), 347 to 368 (ELQV…LPPT), 369 to 389 (ITTL…LPAA), and 390 to 410 (LQIM…LPHF). Positions 452–461 (AMGDFSIVRV) are linker. The interval 462–765 (TRPLHQAVQG…VSSLMSAYWR (304 aa)) is E3 ubiquitin-protein ligase catalytic domain. The region spanning 464 to 758 (PLHQAVQGWL…NILLKKEVSS (295 aa)) is the NEL domain. Cysteine 546 acts as the Glycyl thioester intermediate in catalysis.

The protein belongs to the LRR-containing bacterial E3 ligase family. In terms of assembly, interacts with host TXN. Ubiquitinated in the presence of host E1 ubiquitin-activating enzyme, E2 ubiquitin-conjugating enzyme and ubiquitin.

Its subcellular location is the secreted. The protein localises to the host cytoplasm. It catalyses the reaction S-ubiquitinyl-[E2 ubiquitin-conjugating enzyme]-L-cysteine + [acceptor protein]-L-lysine = [E2 ubiquitin-conjugating enzyme]-L-cysteine + N(6)-ubiquitinyl-[acceptor protein]-L-lysine.. Binding to TXN is inhibited by hydrogen peroxide in vitro. Its function is as follows. Effector proteins function to alter host cell physiology and promote bacterial survival in host tissues. This protein is an E3 ubiquitin ligase that interferes with host's ubiquitination pathway. Can ubiquitinate both ubiquitin and host TXN (thioredoxin). Leads to significant decrease of thioredoxin activity and increase of host cell death. In Salmonella typhimurium (strain LT2 / SGSC1412 / ATCC 700720), this protein is E3 ubiquitin-protein ligase SlrP (slrP).